Here is a 63-residue protein sequence, read N- to C-terminus: uncharacterized protein (63 aa).

The chain crosses the membrane as a helical span at residues 3-23; the sequence is IIYIILGFLSLAIGIIGIFPS.

It is found in the membrane. This is an uncharacterized protein from Haemophilus influenzae (strain ATCC 51907 / DSM 11121 / KW20 / Rd).